The primary structure comprises 445 residues: Phosphoglucosamine mutase (445 aa).

Ser99 (phosphoserine intermediate) is an active-site residue. Positions 99, 242, 244, and 246 each coordinate Mg(2+). Ser99 carries the post-translational modification Phosphoserine.

This sequence belongs to the phosphohexose mutase family. Mg(2+) serves as cofactor. Activated by phosphorylation.

It carries out the reaction alpha-D-glucosamine 1-phosphate = D-glucosamine 6-phosphate. Its function is as follows. Catalyzes the conversion of glucosamine-6-phosphate to glucosamine-1-phosphate. The sequence is that of Phosphoglucosamine mutase from Campylobacter jejuni subsp. jejuni serotype O:23/36 (strain 81-176).